We begin with the raw amino-acid sequence, 881 residues long: Dynamin-like GTPase MGM1, mitochondrial (881 aa).

Residues 1-59 (MNASPVRLLILRRQLATHPAILYSSPYIKSPLVHLHSRMSNVHRSAHANALSFVITRRS) constitute a mitochondrion transit peptide. At 60 to 72 (ISHFPKIISKIIR) the chain is on the mitochondrial matrix side. The helical; Signal-anchor for type II membrane protein transmembrane segment at 73-92 (LPIYVGGGMAAAGSYIAYKM) threads the bilayer. The Mitochondrial intermembrane segment spans residues 93 to 881 (EEASSFTKDK…KSYKGVSKNL (789 aa)). Residues 145-183 (ATSLDDDESKRQGDPKDDDDEDDDDEDDENDSVDTTQDE) form a disordered region. Over residues 160-176 (KDDDDEDDDDEDDENDS) the composition is skewed to acidic residues. Residues 207–505 (HLTLPSIVVI…LEISMSNALE (299 aa)) form the Dynamin-type G domain. Residues 217–224 (GSQSSGKS) form a G1 motif region. Ser-220, Ser-221, Gly-222, Lys-223, Ser-224, Ser-225, and Gly-239 together coordinate GTP. Ser-224 contributes to the Mg(2+) binding site. Residues 243-245 (VTR) are G2 motif. Mg(2+) is bound by residues Thr-244 and Asp-317. Residues 317-320 (DLPG) form a G3 motif region. Positions 385–388 (TKLD) are G4 motif. GTP contacts are provided by Lys-386, Asp-388, and Thr-415. A G5 motif region spans residues 414-417 (ITKT). Residues 668 to 780 (STADQVENCI…KMLKNKCHST (113 aa)) are paddle region. Cys-777 and Cys-786 are joined by a disulfide. A GED domain is found at 780 to 872 (TIEKDRCPEV…KIDSILVFKK (93 aa)).

This sequence belongs to the TRAFAC class dynamin-like GTPase superfamily. Dynamin/Fzo/YdjA family. In terms of assembly, oligomeric complex consisting of membrane-bound and soluble forms of MGM1. Associates with FZO1 through interaction with the intermembrane space domain of UGO1 which binds FZO1 through its cytoplasmic domain. In terms of processing, cleavage of the transit peptide by mitochondrial processing protease (MPP) produces a long integral membrane form of MGM1 (l-MGM1). Further processing by the rhomboid protease PCP1 produces a short peripheral membrane form of MGM1 (s-MGM1). Both isoforms are required for full activity.

It is found in the mitochondrion inner membrane. Its subcellular location is the mitochondrion intermembrane space. It carries out the reaction GTP + H2O = GDP + phosphate + H(+). In terms of biological role, dynamin-related GTPase that is essential for normal mitochondrial morphology by mediating fusion of the mitochondrial inner membranes, regulating cristae morphology and maintaining respiratory chain function. Exists in two forms: the transmembrane, long form (Dynamin-like GTPase MGM1, long form; L-MGM1), which is tethered to the inner mitochondrial membrane, and the short soluble form (Dynamin-like GTPase MGM1, short form; S-MGM1), which results from proteolytic cleavage and localizes in the intermembrane space. Both forms (L-MGM1 and S-MGM1) cooperate to catalyze the fusion of the mitochondrial inner membrane. The equilibrium between L-MGM1 and S-MGM1 is essential: excess levels of S-MGM1, following loss of mitochondrial membrane potential, lead to an impaired equilibrium between L-MGM1 and S-MGM1, inhibiting mitochondrial fusion. Plays a role in the maintenance and remodeling of mitochondrial cristae, some invaginations of the mitochondrial inner membrane that provide an increase in the surface area. Probably acts by forming helical filaments at the inside of inner membrane tubes with the shape and dimensions of crista junctions. Its function is as follows. Constitutes the transmembrane long form (L-MGM1) that plays a central role in mitochondrial inner membrane fusion and cristae morphology. L-MGM1 and the soluble short form (S-MGM1) form higher-order helical assemblies that coordinate the fusion of mitochondrial inner membranes. Inner membrane-anchored L-MGM1 molecules initiate membrane remodeling by recruiting soluble S-MGM1 to rapidly polymerize into a flexible cylindrical scaffold encaging the mitochondrial inner membrane. Once at the membrane surface, the formation of S-MGM1 helices induce bilayer curvature. MGM1 dimerization through the paddle region, which inserts into cardiolipin-containing membrane, promotes GTP hydrolysis and the helical assembly of a flexible MGM1 lattice on the membrane, which drives membrane curvature and mitochondrial fusion. Functionally, constitutes the soluble short form (S-MGM1) generated by cleavage by PCP1, which plays a central role in mitochondrial inner membrane fusion and cristae morphology. The transmembrane long form (L-MGM1) and the S-MGM1 form higher-order helical assemblies that coordinate the fusion of mitochondrial inner membranes. Inner membrane-anchored L-MGM1 molecules initiate membrane remodeling by recruiting soluble S-MGM1 to rapidly polymerize into a flexible cylindrical scaffold encaging the mitochondrial inner membrane. Once at the membrane surface, the formation of S-MGM1 helices induce bilayer curvature. MGM1 dimerization through the paddle region, which inserts into cardiolipin-containing membrane, promotes GTP hydrolysis and the helical assembly of a flexible MGM1 lattice on the membrane, which drives membrane curvature and mitochondrial fusion. Excess levels of S-MGM1 produced by cleavage by PCP1 following stress conditions that induce loss of mitochondrial membrane potential, lead to an impaired equilibrium between L-MGM1 and S-MGM1, thereby inhibiting mitochondrial fusion. This Saccharomyces cerevisiae (strain ATCC 204508 / S288c) (Baker's yeast) protein is Dynamin-like GTPase MGM1, mitochondrial.